The primary structure comprises 470 residues: MKNKGKIIQILGPIVDVKFNENQLPKLLNALTIEFEKTKITLEVAQHIGNDVVRTIAMSSTEGLVRNLEVIDTEAPISVPVGKNVLSHMFNVIGENIDNQSIDPNTEKWSIHRKAPSYEEQTATSEILETGIKVIDLLVPYVKGGKIGLFGGAGVGKTVLVQELINNIAVHHGGLSVFAGVGERTREGNDLYYEMKASGVLDKTALVFGQMNEPPGARMRVALSGLTMAEYFRDELNQDVLLFIDNIFRFTQAGSEVSALLGRMPSAVGYQPTLATEMGQLQERITSTRKGSITSIQAVYVPADDLTDPAPATTFIHLDAQTVLDRNIASLGIYPAIDPLASASRMLSADIVGEEHYKIAREVQRILQKFKELQDIIAILGMDELSDEDKNIVYRARKIRNFLSQPFHVAEKFSGIKGTFVKLSDTLRSFRDILDGKYDDLDESAFLYVGTIEEAKQKHLKNYKGDHVEK.

Residue 151–158 (GGAGVGKT) coordinates ATP.

This sequence belongs to the ATPase alpha/beta chains family. In terms of assembly, F-type ATPases have 2 components, CF(1) - the catalytic core - and CF(0) - the membrane proton channel. CF(1) has five subunits: alpha(3), beta(3), gamma(1), delta(1), epsilon(1). CF(0) has three main subunits: a(1), b(2) and c(9-12). The alpha and beta chains form an alternating ring which encloses part of the gamma chain. CF(1) is attached to CF(0) by a central stalk formed by the gamma and epsilon chains, while a peripheral stalk is formed by the delta and b chains.

It localises to the cell membrane. The catalysed reaction is ATP + H2O + 4 H(+)(in) = ADP + phosphate + 5 H(+)(out). Functionally, produces ATP from ADP in the presence of a proton gradient across the membrane. The catalytic sites are hosted primarily by the beta subunits. In Mycoplasma mobile (strain ATCC 43663 / 163K / NCTC 11711) (Mesomycoplasma mobile), this protein is ATP synthase subunit beta.